A 192-amino-acid chain; its full sequence is Adenylate kinase (192 aa).

ATP is bound at residue 10 to 15; that stretch reads GAGKGT. The tract at residues 30–56 is NMP; it reads GTGGMLRALEPESGEQIHLRIDRGHFA. AMP contacts are provided by residues T31, R36, 82–85, and Q89; that span reads GFPR. Residues 123 to 133 are LID; sequence KRGETENRADD. Position 124 (R124) interacts with ATP. Residues R130 and R141 each contribute to the AMP site. Position 169 (D169) interacts with ATP.

This sequence belongs to the adenylate kinase family. In terms of assembly, monomer.

Its subcellular location is the cytoplasm. It carries out the reaction AMP + ATP = 2 ADP. The protein operates within purine metabolism; AMP biosynthesis via salvage pathway; AMP from ADP: step 1/1. Functionally, catalyzes the reversible transfer of the terminal phosphate group between ATP and AMP. Plays an important role in cellular energy homeostasis and in adenine nucleotide metabolism. This Rhodopirellula baltica (strain DSM 10527 / NCIMB 13988 / SH1) protein is Adenylate kinase.